The sequence spans 813 residues: Xaa-Pro dipeptidyl-peptidase (813 aa).

Catalysis depends on charge relay system residues serine 375, aspartate 495, and histidine 526.

The protein belongs to the peptidase S15 family. In terms of assembly, homodimer.

The protein localises to the cytoplasm. It carries out the reaction Hydrolyzes Xaa-Pro-|- bonds to release unblocked, N-terminal dipeptides from substrates including Ala-Pro-|-p-nitroanilide and (sequentially) Tyr-Pro-|-Phe-Pro-|-Gly-Pro-|-Ile.. In terms of biological role, removes N-terminal dipeptides sequentially from polypeptides having unsubstituted N-termini provided that the penultimate residue is proline. The chain is Xaa-Pro dipeptidyl-peptidase from Lactiplantibacillus plantarum (strain ATCC BAA-793 / NCIMB 8826 / WCFS1) (Lactobacillus plantarum).